Reading from the N-terminus, the 264-residue chain is MIHSKKLTLGICLVLLIILIVGYVIMTKTNGRNAQIKDTFNQTLKLYPTKNLDDFYDKEGFRDQEFKKGDKGTWIVNSEMVIEPKGKDMETRGMVLYINRNTRTTKGYYFISEMTDDSNGRPKDDEKRYPVKMEHNKIIPTKPLPNDKLKKEIENFKFFVQYGNFKDINDYKDGDISYNPNVPSYSAKYQLNNDDYNVQQLRKRYDIPTKQAPKLLLKGDGDLKGSSVGSRSLEFTFVENKEENIYFTDSVQYTPSEDTRYESN.

The helical transmembrane segment at Leu7–Thr27 threads the bilayer.

The protein belongs to the staphylococcal tandem lipoprotein family.

It is found in the cell membrane. This is an uncharacterized protein from Staphylococcus aureus (strain NCTC 8325 / PS 47).